The chain runs to 215 residues: uncharacterized protein (215 aa).

2 disordered regions span residues 1-144 and 156-215; these read MPKG…PYLR and IQGH…GAPA. Composition is skewed to low complexity over residues 16 to 29, 49 to 58, 85 to 96, and 104 to 127; these read ASTP…ASPT, SSSWPKSPIK, SGSSSPGPSSSR, and STAA…RAAP.

This is an uncharacterized protein from Homo sapiens (Human).